A 130-amino-acid polypeptide reads, in one-letter code: Chaperone protein SycT (130 aa).

Binds to YopT.

Its function is as follows. Functions as a specific chaperone for YopT. The protein is Chaperone protein SycT (sycT) of Yersinia enterocolitica serotype O:8 / biotype 1B (strain NCTC 13174 / 8081).